Here is a 98-residue protein sequence, read N- to C-terminus: Large ribosomal subunit protein uL23 (98 aa).

It belongs to the universal ribosomal protein uL23 family. In terms of assembly, part of the 50S ribosomal subunit. Contacts protein L29, and trigger factor when it is bound to the ribosome.

Functionally, one of the early assembly proteins it binds 23S rRNA. One of the proteins that surrounds the polypeptide exit tunnel on the outside of the ribosome. Forms the main docking site for trigger factor binding to the ribosome. In Ruegeria pomeroyi (strain ATCC 700808 / DSM 15171 / DSS-3) (Silicibacter pomeroyi), this protein is Large ribosomal subunit protein uL23.